Reading from the N-terminus, the 145-residue chain is Synaptojanin-2-binding protein (145 aa).

Residues Met-1–Gly-117 lie on the Cytoplasmic side of the membrane. Positions Glu-13–Leu-100 constitute a PDZ domain. Residues Ile-118–Phe-138 traverse the membrane as a helical segment. Over Met-139 to Leu-145 the chain is Mitochondrial intermembrane.

As to quaternary structure, binds (via the PDZ domain) to isoform 2A of SYNJ2 (via the unique motif in the C-terminus). Interacts (via C-terminus) with RALBP1. Interacts (via PDZ domain) with ACVR2A (via C-terminus) and ACVR2B (via C-terminus). Forms a ternary complex with ACVR2A and RALBP1. Interacts with MAPK12. Interacts with DLL1; enhances DLL1 protein stability, and promotes notch signaling in endothelial cells.

It localises to the mitochondrion outer membrane. Its function is as follows. Regulates endocytosis of activin type 2 receptor kinases through the Ral/RALBP1-dependent pathway and may be involved in suppression of activin-induced signal transduction. The sequence is that of Synaptojanin-2-binding protein (SYNJ2BP) from Homo sapiens (Human).